We begin with the raw amino-acid sequence, 337 residues long: Zinc finger protein Gfi-1b (337 aa).

The tract at residues 1–20 is mediates repression of transcription; it reads MPRSFLVKSKKAHTYHQHRF. Positions 1–20 are SNAG domain; it reads MPRSFLVKSKKAHTYHQHRF. 6 C2H2-type zinc fingers span residues 170–193, 199–221, 227–249, 255–277, 283–305, and 311–334; these read YHCVKCNKVFSTPHGLEVHVRRSH, FACEVCGKTFGHAVSLEQHTNIH, FECKMCGKTFKRSSTLSTHLLIH, YPCQYCGKRFHQKSDMKKHTYIH, HKCQVCGKAFSQSSNLITHSRKH, and FSCELCAKGFQRKVDLRRHRETQH.

Expressed in erythroid cells of primitive and definitive lineage and bone marrow cells.

The protein resides in the nucleus. Essential transcriptional regulator necessary for development and differentiation of erythroid and megakaryocytic lineages. Alters histone methylation by recruiting histone methyltransferase to target genes promoters. Plays a role in heterochromatin formation. This chain is Zinc finger protein Gfi-1b (GFI1B), found in Gallus gallus (Chicken).